The following is a 307-amino-acid chain: Elongation factor Ts (307 aa).

The interval 79-82 is involved in Mg(2+) ion dislocation from EF-Tu; that stretch reads TDFV.

The protein belongs to the EF-Ts family.

The protein resides in the cytoplasm. Its function is as follows. Associates with the EF-Tu.GDP complex and induces the exchange of GDP to GTP. It remains bound to the aminoacyl-tRNA.EF-Tu.GTP complex up to the GTP hydrolysis stage on the ribosome. In Bartonella bacilliformis (strain ATCC 35685 / KC583 / Herrer 020/F12,63), this protein is Elongation factor Ts.